The primary structure comprises 145 residues: Protein MMF1, mitochondrial (145 aa).

Residues 1 to 17 constitute a mitochondrion transit peptide; the sequence is MFLRNSVLRTAPVLRRG.

This sequence belongs to the RutC family.

Its subcellular location is the mitochondrion matrix. Its function is as follows. Plays a role in the maintenance of mitochondrial DNA. This Saccharomyces cerevisiae (strain ATCC 204508 / S288c) (Baker's yeast) protein is Protein MMF1, mitochondrial (MMF1).